Here is a 294-residue protein sequence, read N- to C-terminus: Large ribosomal subunit protein uL2 (294 aa).

Disordered stretches follow at residues 1–37 (MGIR…RPEK) and 228–294 (GSVM…RAAQ). Residues 10 to 22 (TPSTRHMTVSNFE) are compositionally biased toward polar residues. A compositionally biased stretch (basic and acidic residues) spans 23–37 (ELSRDENGKRPRPEK). A compositionally biased stretch (basic residues) spans 264–285 (KTRKRNKPSNKFIVRGRRRGGR).

This sequence belongs to the universal ribosomal protein uL2 family. In terms of assembly, part of the 50S ribosomal subunit. Forms a bridge to the 30S subunit in the 70S ribosome.

One of the primary rRNA binding proteins. Required for association of the 30S and 50S subunits to form the 70S ribosome, for tRNA binding and peptide bond formation. It has been suggested to have peptidyltransferase activity; this is somewhat controversial. Makes several contacts with the 16S rRNA in the 70S ribosome. The chain is Large ribosomal subunit protein uL2 from Synechococcus sp. (strain JA-3-3Ab) (Cyanobacteria bacterium Yellowstone A-Prime).